The sequence spans 319 residues: Urease accessory protein UreD (319 aa).

The tract at residues 284 to 319 (RLSTPQPPREWPLQEEGTFSNERFTKDHQSPSASPH) is disordered.

This sequence belongs to the UreD family. As to quaternary structure, ureD, UreF and UreG form a complex that acts as a GTP-hydrolysis-dependent molecular chaperone, activating the urease apoprotein by helping to assemble the nickel containing metallocenter of UreC. The UreE protein probably delivers the nickel.

The protein resides in the cytoplasm. Required for maturation of urease via the functional incorporation of the urease nickel metallocenter. This Prochlorococcus marinus (strain MIT 9313) protein is Urease accessory protein UreD.